Consider the following 88-residue polypeptide: LYR motif-containing protein 2 (88 aa).

The N-terminal 19 residues, 1–19 (MAASRLPPATLTLKQFVRR), are a transit peptide targeting the mitochondrion.

Belongs to the complex I LYR family.

It is found in the mitochondrion. Its function is as follows. Involved in efficient integration of the N-module into mitochondrial respiratory chain complex I. The sequence is that of LYR motif-containing protein 2 (LYRM2) from Homo sapiens (Human).